The sequence spans 1431 residues: Stabilin-2 (1431 aa).

At 1-1322 the chain is on the extracellular side; that stretch reads SLPSLLTRLE…PPTAATAAHS (1322 aa). Residues 2–130 enclose the FAS1 domain; it reads LPSLLTRLEQ…GVIHGLEKVL (129 aa). N-linked (GlcNAc...) asparagine glycosylation is found at asparagine 112 and asparagine 140. Residues 207 to 272 form the Laminin EGF-like 1 domain; that stretch reads PQCQACPGRG…CSCVHGRCSQ (66 aa). 18 disulfides stabilise this stretch: cysteine 212–cysteine 226, cysteine 220–cysteine 236, cysteine 238–cysteine 247, cysteine 259–cysteine 270, cysteine 263–cysteine 280, cysteine 282–cysteine 291, cysteine 300–cysteine 310, cysteine 304–cysteine 320, cysteine 322–cysteine 333, cysteine 339–cysteine 352, cysteine 346–cysteine 362, cysteine 364–cysteine 375, cysteine 381–cysteine 394, cysteine 388–cysteine 404, cysteine 406–cysteine 417, cysteine 423–cysteine 436, cysteine 430–cysteine 446, and cysteine 448–cysteine 459. N-linked (GlcNAc...) asparagine glycans are attached at residues asparagine 231 and asparagine 243. EGF-like domains follow at residues 296–334, 335–376, 377–418, and 419–460; these read TTDNCNGTCHTSANCLLDPDGKASCKCAAGFRGNGTVCT, AINA…IVCL, EINP…KVCS, and LINV…IVCR. N-linked (GlcNAc...) asparagine glycosylation is present at asparagine 301. Asparagine 329 carries N-linked (GlcNAc...) asparagine glycosylation. The N-linked (GlcNAc...) asparagine glycan is linked to asparagine 437. FAS1 domains lie at 460–588 and 604–745; these read RGSI…DKLL and VLQN…DCLL. Asparagine 607 is a glycosylation site (N-linked (GlcNAc...) asparagine). The Laminin EGF-like 2 domain maps to 822–887; the sequence is PDCQACPGGP…SCSEHGQCDE (66 aa). Intrachain disulfides connect cysteine 827–cysteine 841, cysteine 835–cysteine 851, cysteine 853–cysteine 862, cysteine 874–cysteine 885, cysteine 879–cysteine 895, and cysteine 897–cysteine 906. A glycan (N-linked (GlcNAc...) asparagine) is linked at asparagine 858. Asparagine 929 carries an N-linked (GlcNAc...) asparagine glycan. EGF-like domains follow at residues 947-987 and 988-1030; these read VVDF…YSCI and EIDP…VDCE. 8 disulfides stabilise this stretch: cysteine 951-cysteine 964, cysteine 958-cysteine 973, cysteine 975-cysteine 986, cysteine 992-cysteine 1006, cysteine 1000-cysteine 1016, cysteine 1018-cysteine 1029, cysteine 1085-cysteine 1154, and cysteine 1109-cysteine 1130. Positions 1063–1156 constitute a Link domain; sequence GVFHLRSPLG…SEMWDVFCYR (94 aa). 5 N-linked (GlcNAc...) asparagine glycosylation sites follow: asparagine 1145, asparagine 1161, asparagine 1233, asparagine 1249, and asparagine 1258. Positions 1176 to 1310 constitute an FAS1 4 domain; sequence SGNLLQVLMS…GILHIISEPL (135 aa). A helical membrane pass occupies residues 1323–1343; it reads GLGTGIFCAVVLVTGAIALAA. The Cytoplasmic portion of the chain corresponds to 1344 to 1431; it reads YSYFRLKQRT…QQATTVTVPR (88 aa). Residues 1368-1378 form an interaction with TMSB4X region; sequence WLLASSSPRIS.

In terms of assembly, interacts with GULP1, heparin, alpha-M/beta-2 integrin (ITGAM and ITGB2), and thymosin beta 4 (TMSB4X). Post-translationally, glycosylated. Proteolytically processed to yield a 175 kDa protein. In terms of tissue distribution, initially expressed in all vascular cells, including those of sinusoidal-like structures, vitellin veins, and hepatic veins or sinus venosus, in E13.5 fetal liver. The expression then progressively disappears in the portal and hepatic veins, but the expression in sinusoidals endothelial cells (SECs) is retained and becomes stronger during development.

The protein resides in the cytoplasm. It is found in the cell membrane. In terms of biological role, phosphatidylserine receptor that enhances the engulfment of apoptotic cells. Hyaluronan receptor that binds to and mediates endocytosis of hyaluronic acid (HA). Also acts, in different species, as a primary systemic scavenger receptor for heparin (Hep), chondroitin sulfate (CS), dermatan sulfate (DS), nonglycosaminoglycan (GAG), acetylated low-density lipoprotein (AcLDL), pro-collagen propeptides and advanced glycation end products (AGE). May serve to maintain tissue integrity by supporting extracellular matrix turnover or it may contribute to maintaining fluidity of bodily liquids by resorption of hyaluronan. Counter receptor which plays an important role in lymphocyte recruitment in the hepatic vasculature. Binds to both Gram-positive and Gram-negative bacteria and may play a role in defense against bacterial infection. The proteolytically processed 175 kDa form also functions as an endocytosis receptor for heparin internalization as well as HA and CS. The sequence is that of Stabilin-2 from Rattus norvegicus (Rat).